The primary structure comprises 178 residues: Interleukin-10 (178 aa).

Positions 1-18 (MPRSALLCCLILLAGVAA) are cleaved as a signal peptide. Disulfide bonds link C30-C126 and C80-C132. The N-linked (GlcNAc...) asparagine glycan is linked to N134.

This sequence belongs to the IL-10 family. In terms of assembly, homodimer. Interacts with IL10RA and IL10RB.

The protein resides in the secreted. Functionally, major immune regulatory cytokine that acts on many cells of the immune system where it has profound anti-inflammatory functions, limiting excessive tissue disruption caused by inflammation. Mechanistically, IL10 binds to its heterotetrameric receptor comprising IL10RA and IL10RB leading to JAK1 and STAT2-mediated phosphorylation of STAT3. In turn, STAT3 translocates to the nucleus where it drives expression of anti-inflammatory mediators. Targets antigen-presenting cells (APCs) such as macrophages and monocytes and inhibits their release of pro-inflammatory cytokines including granulocyte-macrophage colony-stimulating factor /GM-CSF, granulocyte colony-stimulating factor/G-CSF, IL-1 alpha, IL-1 beta, IL-6, IL-8 and TNF-alpha. Also interferes with antigen presentation by reducing the expression of MHC-class II and co-stimulatory molecules, thereby inhibiting their ability to induce T cell activation. In addition, controls the inflammatory response of macrophages by reprogramming essential metabolic pathways including mTOR signaling. This Lama glama (Llama) protein is Interleukin-10 (IL10).